A 939-amino-acid polypeptide reads, in one-letter code: Protein translocase subunit SecA 1 (939 aa).

ATP contacts are provided by residues Gln-85, 103-107, and Asp-504; that span reads GEGKT. A disordered region spans residues 848 to 939; it reads EVPVEDEKPS…QSKGGRRRKK (92 aa). Composition is skewed to basic and acidic residues over residues 852-863, 872-889, and 914-925; these read EDEKPSLEKEDA, PEIRAKGLEAPQRPDRLH, and PVRSEADGLTRA. The segment covering 926-939 has biased composition (basic residues); sequence ERRKQSKGGRRRKK.

This sequence belongs to the SecA family. In terms of assembly, monomer and homodimer. Part of the essential Sec protein translocation apparatus which comprises SecA, SecYEG and auxiliary proteins SecDF. Other proteins may also be involved.

Its subcellular location is the cell membrane. The protein localises to the cytoplasm. The enzyme catalyses ATP + H2O + cellular proteinSide 1 = ADP + phosphate + cellular proteinSide 2.. Functionally, part of the Sec protein translocase complex. Interacts with the SecYEG preprotein conducting channel. Has a central role in coupling the hydrolysis of ATP to the transfer of proteins into and across the cell membrane, serving as an ATP-driven molecular motor driving the stepwise translocation of polypeptide chains across the membrane. This Streptomyces avermitilis (strain ATCC 31267 / DSM 46492 / JCM 5070 / NBRC 14893 / NCIMB 12804 / NRRL 8165 / MA-4680) protein is Protein translocase subunit SecA 1.